The chain runs to 329 residues: MEETAHELTVKQYVEQQRELEREAREVLPYSFDTCTYSMGYLKQPLYACLTCQKASGSLNAVCYSCSISCHADHDLVDLFNKRHFRCDCGTTRTHSIPCNLRKSVDECGSENDYNHNFEGRFCICDTVYNPETEEGTMFQCILCEDWFHEKCLQKTNKGIAIPDAETFEWLVCSECSEKYRDHLLNQKHESIAGTERAPLFLSENFRENLCPCESCISLRNLEMPMLVAEEPIYEPPEDSEDGISEMNEDPSESGEMIEQVISSTMNDVLRILDRLPRVQANESVYAYNRLKSELTDFLTPFARENRVVTKEDISNFFLERSRISKNLR.

Residues 33–104 (DTCTYSMGYL…HSIPCNLRKS (72 aa)) form a UBR-type zinc finger. A PHD-type zinc finger spans residues 120–179 (GRFCICDTVYNPETEEGTMFQCILCEDWFHEKCLQKTNKGIAIPDAETFEWLVCSECSEK).

The protein belongs to the UBR7 family.

In terms of biological role, not known, interfere with mitotic chromosome segregation when overexpressed. The polypeptide is Protein mlo2 (mlo2) (Schizosaccharomyces pombe (strain 972 / ATCC 24843) (Fission yeast)).